Consider the following 62-residue polypeptide: Short neurotoxin 1 (62 aa).

Residues 1-16 (LECHNQQSIQTPTTTG) are compositionally biased toward polar residues. A disordered region spans residues 1-20 (LECHNQQSIQTPTTTGCSGG). Cystine bridges form between Cys-3–Cys-24, Cys-17–Cys-41, Cys-43–Cys-54, and Cys-55–Cys-60.

The protein belongs to the three-finger toxin family. Short-chain subfamily. Type I alpha-neurotoxin sub-subfamily. Expressed by the venom gland.

It localises to the secreted. In terms of biological role, binds to muscle nicotinic acetylcholine receptor (nAChR) and inhibit acetylcholine from binding to the receptor, thereby impairing neuromuscular transmission. This is Short neurotoxin 1 from Naja kaouthia (Monocled cobra).